A 623-amino-acid chain; its full sequence is F-box protein FBX14 (623 aa).

Residues 18–48 (LNLNPPCSSSSSSSSAATFTNKSRNFKSSPP) form a disordered region. A compositionally biased stretch (polar residues) spans 33–45 (AATFTNKSRNFKS). One can recognise an F-box domain in the interval 54 to 97 (VLENVLENVLQFLTSRCDRNAVSLVCRSWYRVEAQTRLEVFIGN). Residue lysine 119 participates in 1D-myo-inositol hexakisphosphate binding. Positions 126 to 127 (DF) are interaction with auxin-responsive proteins. Residues 158–159 (KR) and arginine 391 contribute to the 1D-myo-inositol hexakisphosphate site. The tract at residues 394 to 399 (PFDPRE) is interaction with auxin-responsive proteins. 447-449 (VFR) contributes to the 1D-myo-inositol hexakisphosphate binding site. The interaction with auxin-responsive proteins stretch occupies residues 451–455 (CIMGR). Arginine 482 serves as a coordination point for 1D-myo-inositol hexakisphosphate. An interaction with auxin-responsive proteins region spans residues 510–511 (AF). Residues 530-531 (QK) and arginine 555 each bind 1D-myo-inositol hexakisphosphate.

Part of a SCF (SKP1-cullin-F-box) protein ligase complex. May interact with auxin and auxin-responsive proteins.

Its subcellular location is the nucleus. It participates in protein modification; protein ubiquitination. The sequence is that of F-box protein FBX14 (FBX14) from Arabidopsis thaliana (Mouse-ear cress).